The sequence spans 85 residues: Large ribosomal subunit protein bL27 (85 aa).

Positions 1–22 are disordered; the sequence is MAHKKAGGSTNNGRDSESKRLG.

It belongs to the bacterial ribosomal protein bL27 family.

The chain is Large ribosomal subunit protein bL27 from Psychromonas ingrahamii (strain DSM 17664 / CCUG 51855 / 37).